A 460-amino-acid chain; its full sequence is MTVEQNTPDQDTIVAQATASGRGGVGIVRVSGSLAAKVAEQIIGHVPLIRNAQYVPFKSNTGEPLDQGIALFFKAPHSFTGEDVLELQGHGGQVVLDMLIKATLHVPNVRLARPGEFSERAYLNDKLDLAQAEAIADLIDASSEQAARGALRSLQGEFSTQINSLVELLTHLRIYVEAAIDFPDEEIDFLSDGKVQNDLKAITKQLSSVKSQARQGSLLREGMRVVIAGRPNAGKSSLLNALAGRDAAIVTAIAGTTRDVLKEHIHIDGMPLHIIDTAGLRDSSDEVERIGIERAWQEIEQADRVLFMLDSTETHENDPYKIWPEFMRRLPKNMGLTVIRNKADLSGENVGKVQYDDYPVFQLSASHKQGIEVLAEHLKECMGFHSSNEGQFIARRRHIDAIERAEEHLLLGKQQLEDNLAGELLAEELRLAQAYLSEITGEFSSDDLLGKIFSSFCIGK.

3 residues coordinate (6S)-5-formyl-5,6,7,8-tetrahydrofolate: arginine 29, glutamate 86, and lysine 126. Residues 222-383 (GMRVVIAGRP…LAEHLKECMG (162 aa)) enclose the TrmE-type G domain. Position 232 (asparagine 232) interacts with K(+). GTP is bound by residues 232 to 237 (NAGKSS), 251 to 257 (TAIAGTT), 276 to 279 (DTAG), and 341 to 344 (NKAD). Serine 236 contributes to the Mg(2+) binding site. K(+) contacts are provided by threonine 251, isoleucine 253, and threonine 256. Position 257 (threonine 257) interacts with Mg(2+). Lysine 460 lines the (6S)-5-formyl-5,6,7,8-tetrahydrofolate pocket.

It belongs to the TRAFAC class TrmE-Era-EngA-EngB-Septin-like GTPase superfamily. TrmE GTPase family. As to quaternary structure, homodimer. Heterotetramer of two MnmE and two MnmG subunits. The cofactor is K(+).

It localises to the cytoplasm. Its function is as follows. Exhibits a very high intrinsic GTPase hydrolysis rate. Involved in the addition of a carboxymethylaminomethyl (cmnm) group at the wobble position (U34) of certain tRNAs, forming tRNA-cmnm(5)s(2)U34. In Pseudoalteromonas atlantica (strain T6c / ATCC BAA-1087), this protein is tRNA modification GTPase MnmE.